The primary structure comprises 122 residues: MTQSTTEDTLLRLAAVIDSRKGGDPEQSYVSRLFHKGDDAILKKIGEEATEVVLAAKDVRQGGAPSALVGEVADLWFHCLVALSHFDLSPADVIAELERREGMSGIEEKALRKRREREENGG.

This sequence belongs to the PRA-PH family.

It is found in the cytoplasm. The enzyme catalyses 1-(5-phospho-beta-D-ribosyl)-ATP + H2O = 1-(5-phospho-beta-D-ribosyl)-5'-AMP + diphosphate + H(+). The protein operates within amino-acid biosynthesis; L-histidine biosynthesis; L-histidine from 5-phospho-alpha-D-ribose 1-diphosphate: step 2/9. This is Phosphoribosyl-ATP pyrophosphatase from Burkholderia mallei (strain NCTC 10247).